The primary structure comprises 226 residues: Ribonuclease 3 (226 aa).

One can recognise an RNase III domain in the interval 4 to 127; the sequence is LEEFEKKLGY…VMGAIYLEKG (124 aa). Glu40 contacts Mg(2+). The active site involves Asp44. Residues Asn113 and Glu116 each coordinate Mg(2+). Residue Glu116 is part of the active site. The region spanning 154 to 223 is the DRBM domain; the sequence is DFKTALQEFT…AKEALKILKA (70 aa).

Belongs to the ribonuclease III family. Homodimer. Mg(2+) is required as a cofactor.

The protein localises to the cytoplasm. It carries out the reaction Endonucleolytic cleavage to 5'-phosphomonoester.. Functionally, digests double-stranded RNA. Involved in the processing of primary rRNA transcript to yield the immediate precursors to the large and small rRNAs (23S and 16S). Processes some mRNAs, and tRNAs when they are encoded in the rRNA operon. Processes pre-crRNA and tracrRNA of type II CRISPR loci if present in the organism. The protein is Ribonuclease 3 of Nitratiruptor sp. (strain SB155-2).